Reading from the N-terminus, the 114-residue chain is Large ribosomal subunit protein bL19 (114 aa).

Belongs to the bacterial ribosomal protein bL19 family.

In terms of biological role, this protein is located at the 30S-50S ribosomal subunit interface and may play a role in the structure and function of the aminoacyl-tRNA binding site. The sequence is that of Large ribosomal subunit protein bL19 from Lysinibacillus sphaericus (strain C3-41).